The chain runs to 193 residues: dCTP deaminase (193 aa).

DCTP contacts are provided by residues 110-115 (RSSLAR), Asp-128, 136-138 (VLE), Tyr-171, Lys-178, and Gln-182. Glu-138 acts as the Proton donor/acceptor in catalysis. The disordered stretch occupies residues 169–193 (RPYNRREDAKYRNQQGAVASRIDKD).

Belongs to the dCTP deaminase family. In terms of assembly, homotrimer.

The catalysed reaction is dCTP + H2O + H(+) = dUTP + NH4(+). Its pathway is pyrimidine metabolism; dUMP biosynthesis; dUMP from dCTP (dUTP route): step 1/2. Catalyzes the deamination of dCTP to dUTP. This is dCTP deaminase from Sodalis glossinidius (strain morsitans).